The primary structure comprises 326 residues: Glycerol-3-phosphate dehydrogenase [NAD(P)+] (326 aa).

NADPH-binding residues include W13, R33, and K107. Sn-glycerol 3-phosphate contacts are provided by K107, G135, and S137. NADPH is bound at residue A139. Residues K190, D243, S253, R254, and N255 each contribute to the sn-glycerol 3-phosphate site. Residue K190 is the Proton acceptor of the active site. R254 is an NADPH binding site. NADPH contacts are provided by L273 and E275.

Belongs to the NAD-dependent glycerol-3-phosphate dehydrogenase family.

Its subcellular location is the cytoplasm. It catalyses the reaction sn-glycerol 3-phosphate + NAD(+) = dihydroxyacetone phosphate + NADH + H(+). It carries out the reaction sn-glycerol 3-phosphate + NADP(+) = dihydroxyacetone phosphate + NADPH + H(+). The protein operates within membrane lipid metabolism; glycerophospholipid metabolism. In terms of biological role, catalyzes the reduction of the glycolytic intermediate dihydroxyacetone phosphate (DHAP) to sn-glycerol 3-phosphate (G3P), the key precursor for phospholipid synthesis. This is Glycerol-3-phosphate dehydrogenase [NAD(P)+] from Brucella ovis (strain ATCC 25840 / 63/290 / NCTC 10512).